The primary structure comprises 245 residues: Cytochrome P450 CYP82H23 (245 aa).

The protein belongs to the cytochrome P450 family. Heme is required as a cofactor.

In terms of biological role, probable heme-thiolate monooxygenase. The chain is Cytochrome P450 CYP82H23 from Panax ginseng (Korean ginseng).